We begin with the raw amino-acid sequence, 124 residues long: Urocortin (124 aa).

The signal sequence occupies residues 1–25; it reads MRQAGRAALLAALLLLVQLCPGSSQ. The segment at 23–46 is disordered; that stretch reads SSQRSPEAAGVQDPSLRWSPGARN. Residues 26–82 constitute a propeptide that is removed on maturation; sequence RSPEAAGVQDPSLRWSPGARNQGGGARALLLLLAERFPRRAGPGRLGLGTAGERPRR. Residue Val122 is modified to Valine amide.

Belongs to the sauvagine/corticotropin-releasing factor/urotensin I family. As to quaternary structure, interacts with CRHR1 and CRHR2 (via their N-terminal extracellular domain). As to expression, keratinocytes in epidermis and the outer and inner root sheaths of hair follicles, epithelium of sebaceous and sweat glands, erector pili muscle, cutaneous blood vessel walls, cutaneous nerves and dermal mononuclear cells. Detected in plasma cells in the lamia propria in colon mucosa (at protein level). Expressed in pituitary and adrenal glands. Detected in plasma cells in the lamia propria in colon mucosa.

It is found in the secreted. In terms of biological role, acts in vitro to stimulate the secretion of adrenocorticotropic hormone (ACTH). Binds with high affinity to CRF receptor types 1, 2-alpha, and 2-beta. Plays a role in the establishment of normal hearing thresholds. Reduces food intake and regulates ghrelin levels in gastric body and plasma. This chain is Urocortin (UCN), found in Homo sapiens (Human).